The sequence spans 550 residues: CTP synthase (550 aa).

An amidoligase domain region spans residues 1–267 (MKTKFIFITG…DQKIAIMLRL (267 aa)). Ser14 contributes to the CTP binding site. Ser14 is a binding site for UTP. ATP contacts are provided by residues 15–20 (SLGKGL) and Asp72. Residues Asp72 and Glu141 each contribute to the Mg(2+) site. CTP is bound by residues 148–150 (DIE), 188–193 (KTKPTQ), and Lys224. UTP contacts are provided by residues 188–193 (KTKPTQ) and Lys224. The 254-residue stretch at 292 to 545 (TIGIVGKYVD…IKAAKKEAMG (254 aa)) folds into the Glutamine amidotransferase type-1 domain. Gly354 is an L-glutamine binding site. Cys381 (nucleophile; for glutamine hydrolysis) is an active-site residue. Residues 382 to 385 (LGMQ), Glu405, and Arg473 contribute to the L-glutamine site. Residues His518 and Glu520 contribute to the active site.

The protein belongs to the CTP synthase family. Homotetramer.

The enzyme catalyses UTP + L-glutamine + ATP + H2O = CTP + L-glutamate + ADP + phosphate + 2 H(+). The catalysed reaction is L-glutamine + H2O = L-glutamate + NH4(+). It carries out the reaction UTP + NH4(+) + ATP = CTP + ADP + phosphate + 2 H(+). The protein operates within pyrimidine metabolism; CTP biosynthesis via de novo pathway; CTP from UDP: step 2/2. Allosterically activated by GTP, when glutamine is the substrate; GTP has no effect on the reaction when ammonia is the substrate. The allosteric effector GTP functions by stabilizing the protein conformation that binds the tetrahedral intermediate(s) formed during glutamine hydrolysis. Inhibited by the product CTP, via allosteric rather than competitive inhibition. Its function is as follows. Catalyzes the ATP-dependent amination of UTP to CTP with either L-glutamine or ammonia as the source of nitrogen. Regulates intracellular CTP levels through interactions with the four ribonucleotide triphosphates. This chain is CTP synthase, found in Nitratidesulfovibrio vulgaris (strain DSM 19637 / Miyazaki F) (Desulfovibrio vulgaris).